The sequence spans 155 residues: Transcriptional repressor NrdR (155 aa).

A zinc finger spans residues 3–34 (CPFCGNIDTQVKDSRPAEDHVSIRRRRFCPAC). The region spanning 49–139 (LVVIKSTGKR…VYKNFQAADD (91 aa)) is the ATP-cone domain.

The protein belongs to the NrdR family. Zn(2+) serves as cofactor.

Negatively regulates transcription of bacterial ribonucleotide reductase nrd genes and operons by binding to NrdR-boxes. The protein is Transcriptional repressor NrdR of Roseobacter denitrificans (strain ATCC 33942 / OCh 114) (Erythrobacter sp. (strain OCh 114)).